A 238-amino-acid chain; its full sequence is Probable transglycosylase SceD 3 (238 aa).

Residues 1–27 form the signal peptide; the sequence is MKKTVVASTLAVGLGVTGFAAGNSADA. The interval 82 to 161 is disordered; that stretch reads YGQGSTNAPA…SEASEGSSVN (80 aa). Low complexity predominate over residues 89-156; the sequence is APAQETAEQP…NESSSSEASE (68 aa).

The protein belongs to the transglycosylase family. SceD subfamily.

The protein localises to the secreted. Is able to cleave peptidoglycan and affects clumping and separation of bacterial cells. This is Probable transglycosylase SceD 3 (sceD3) from Staphylococcus saprophyticus subsp. saprophyticus (strain ATCC 15305 / DSM 20229 / NCIMB 8711 / NCTC 7292 / S-41).